The following is a 704-amino-acid chain: Ubiquitin-like modifier-activating enzyme atg7 (704 aa).

Positions 372-377 (GAGTLG) match the GXGXXG motif motif. The active-site Glycyl thioester intermediate is cysteine 555. Residues 660 to 699 (ALTEKDYITELSGLAEVQRKAEAAANDVEWDSDEEGMEDE) are homodimerization. Residues 682 to 704 (AAANDVEWDSDEEGMEDEEPELL) form a disordered region. Residues 687 to 704 (VEWDSDEEGMEDEEPELL) are compositionally biased toward acidic residues.

The protein belongs to the ATG7 family. Homodimer. Interacts with ATG8 through a thioester bond between Cys-555 and the C-terminal Gly of ATG8 and with ATG12 through a thioester bond between Cys-555 and the C-terminal Gly of ATG12. Also interacts with ATG3.

Its subcellular location is the cytoplasm. The protein resides in the preautophagosomal structure. E1-like activating enzyme involved in the 2 ubiquitin-like systems required for cytoplasm to vacuole transport (Cvt) and autophagy. Activates ATG12 for its conjugation with ATG5 and ATG8 for its conjugation with phosphatidylethanolamine. Both systems are needed for the ATG8 association to Cvt vesicles and autophagosomes membranes. Autophagy is essential for maintenance of amino acid levels and protein synthesis under nitrogen starvation. Required for selective autophagic degradation of the nucleus (nucleophagy) as well as for mitophagy which contributes to regulate mitochondrial quantity and quality by eliminating the mitochondria to a basal level to fulfill cellular energy requirements and preventing excess ROS production. Required for normal mycelial growth and conidiogenesis, and regulates sclerotial formation. Plays an essential role in pathogenesis. This Botryotinia fuckeliana (strain T4) (Noble rot fungus) protein is Ubiquitin-like modifier-activating enzyme atg7.